Consider the following 537-residue polypeptide: Exoglucanase 1 (537 aa).

A signal peptide spans Met-1–Ala-18. The catalytic stretch occupies residues Leu-19–Gly-453. Asn-136 carries N-linked (GlcNAc...) asparagine glycosylation. Residue Glu-235 is the Nucleophile of the active site. Glu-240 acts as the Proton donor in catalysis. 2 N-linked (GlcNAc...) asparagine glycosylation sites follow: Asn-414 and Asn-456. The segment at Pro-454–Thr-477 is linker. The segment covering Thr-458–Gly-502 has biased composition (low complexity). The segment at Thr-458 to Ala-503 is disordered. A CBM1 domain is found at Thr-501–Leu-537. Disulfide bonds link Cys-509/Cys-526 and Cys-520/Cys-536.

Belongs to the glycosyl hydrolase 7 (cellulase C) family.

Its subcellular location is the secreted. It carries out the reaction Hydrolysis of (1-&gt;4)-beta-D-glucosidic linkages in cellulose and cellotetraose, releasing cellobiose from the non-reducing ends of the chains.. This is Exoglucanase 1 (cbh1) from Penicillium janthinellum (Penicillium vitale).